We begin with the raw amino-acid sequence, 432 residues long: Enolase (432 aa).

(2R)-2-phosphoglycerate is bound at residue Q167. The Proton donor role is filled by E209. Mg(2+) contacts are provided by D246, E287, and D314. (2R)-2-phosphoglycerate-binding residues include K339, R368, S369, and K390. K339 acts as the Proton acceptor in catalysis.

The protein belongs to the enolase family. It depends on Mg(2+) as a cofactor.

It localises to the cytoplasm. The protein localises to the secreted. The protein resides in the cell surface. The catalysed reaction is (2R)-2-phosphoglycerate = phosphoenolpyruvate + H2O. The protein operates within carbohydrate degradation; glycolysis; pyruvate from D-glyceraldehyde 3-phosphate: step 4/5. Its function is as follows. Catalyzes the reversible conversion of 2-phosphoglycerate (2-PG) into phosphoenolpyruvate (PEP). It is essential for the degradation of carbohydrates via glycolysis. This is Enolase from Prochlorococcus marinus (strain SARG / CCMP1375 / SS120).